The following is a 432-amino-acid chain: Neuronal pentraxin-1 (432 aa).

Positions 1–22 (MPAGRAARTCALLALCLLGAGA) are cleaved as a signal peptide. Residues 90–122 (ESQSTLDPGAGEARAGGGRKQPGSGKNTMGDLS) form a disordered region. Asn-154 and Asn-193 each carry an N-linked (GlcNAc...) asparagine glycan. The region spanning 226 to 428 (DKFQLTFPLR…GATKWTFEAC (203 aa)) is the Pentraxin (PTX) domain. Residues Cys-256 and Cys-316 are joined by a disulfide bond. Ca(2+) is bound by residues Asn-280, Glu-358, Gln-359, Asp-360, and Gln-370.

Homooligomer or heterooligomer (probably pentamer) with neuronal pentraxin receptor (NPTXR). Ca(2+) serves as cofactor.

Its subcellular location is the secreted. It is found in the cytoplasmic vesicle. The protein resides in the secretory vesicle. It localises to the endoplasmic reticulum. In terms of biological role, may be involved in mediating uptake of synaptic material during synapse remodeling or in mediating the synaptic clustering of AMPA glutamate receptors at a subset of excitatory synapses. The chain is Neuronal pentraxin-1 (NPTX1) from Homo sapiens (Human).